The sequence spans 262 residues: Taurine import ATP-binding protein TauB (262 aa).

Residues 4-234 form the ABC transporter domain; the sequence is VDHASVFFAA…RFAETGDARS (231 aa). ATP is bound at residue 39 to 46; sequence GASGCGKS.

It belongs to the ABC transporter superfamily. Taurine importer (TC 3.A.1.17.1) family. The complex is composed of two ATP-binding proteins (TauB), two transmembrane proteins (TauC) and a solute-binding protein (TauA).

The protein resides in the cell inner membrane. It carries out the reaction taurine(out) + ATP + H2O = taurine(in) + ADP + phosphate + H(+). Part of the ABC transporter complex TauABC involved in taurine import. Responsible for energy coupling to the transport system. In Rhizobium johnstonii (strain DSM 114642 / LMG 32736 / 3841) (Rhizobium leguminosarum bv. viciae), this protein is Taurine import ATP-binding protein TauB.